The sequence spans 109 residues: UPF0482 protein ESA_01750 (109 aa).

Residues 1–24 (MNKFLRHSLLLALLTGALSGVANA) form the signal peptide. Over residues 38 to 55 (RTRQDAAMDKEQWNDTRS) the composition is skewed to basic and acidic residues. Positions 38–63 (RTRQDAAMDKEQWNDTRSLRQKVNKR) are disordered.

Belongs to the UPF0482 family.

The polypeptide is UPF0482 protein ESA_01750 (Cronobacter sakazakii (strain ATCC BAA-894) (Enterobacter sakazakii)).